Reading from the N-terminus, the 469-residue chain is RNA-editing ligase 1, mitochondrial (469 aa).

The transit peptide at 1 to 44 (MQLQRLGAPLLKRLVGGCIRQSTAPIMPCVVVSGSGVFLTPVRT) directs the protein to the mitochondrion. ATP-binding positions include 59 to 61 (IEI), 86 to 92 (EKVHGTN), Arg-111, Glu-159, Phe-209, and 307 to 309 (KLR). The active-site N6-AMP-lysine intermediate is the Lys-87. The segment at 450 to 469 (AAAQSEAIPPLSPAAPTKGE) is disordered.

The protein belongs to the RNA ligase 2 family. Component of the RNA editing complex (editosome), a 1600 kDa complex composed of at least 20 proteins. Interacts with terminal uridylyltransferase MEAT1.

The protein resides in the mitochondrion. It carries out the reaction ATP + (ribonucleotide)n-3'-hydroxyl + 5'-phospho-(ribonucleotide)m = (ribonucleotide)n+m + AMP + diphosphate.. Functionally, essential for RNA editing. RNA editing in kinetoplastid mitochondria inserts and deletes uridylates at multiple sites in pre-mRNAs as directed by guide RNAs. The sequence is that of RNA-editing ligase 1, mitochondrial (REL1) from Trypanosoma brucei brucei.